Reading from the N-terminus, the 273-residue chain is Hemin import ATP-binding protein HmuV (273 aa).

An ABC transporter domain is found at 2 to 256 (LTAHHLDVAR…AHIAQCYGFA (255 aa)). Position 34–41 (34–41 (GRNGAGKS)) interacts with ATP.

The protein belongs to the ABC transporter superfamily. Heme (hemin) importer (TC 3.A.1.14.5) family. In terms of assembly, the complex is composed of two ATP-binding proteins (HmuV), two transmembrane proteins (HmuU) and a solute-binding protein (HmuT).

It localises to the cell inner membrane. Functionally, part of the ABC transporter complex HmuTUV involved in hemin import. Responsible for energy coupling to the transport system. The polypeptide is Hemin import ATP-binding protein HmuV (Burkholderia lata (strain ATCC 17760 / DSM 23089 / LMG 22485 / NCIMB 9086 / R18194 / 383)).